Here is a 313-residue protein sequence, read N- to C-terminus: 4-diphosphocytidyl-2-C-methyl-D-erythritol kinase (313 aa).

Residue Lys-27 is part of the active site. 110-120 (PIGGGVGGGSS) contributes to the ATP binding site. Asp-152 is a catalytic residue.

This sequence belongs to the GHMP kinase family. IspE subfamily.

The enzyme catalyses 4-CDP-2-C-methyl-D-erythritol + ATP = 4-CDP-2-C-methyl-D-erythritol 2-phosphate + ADP + H(+). It participates in isoprenoid biosynthesis; isopentenyl diphosphate biosynthesis via DXP pathway; isopentenyl diphosphate from 1-deoxy-D-xylulose 5-phosphate: step 3/6. Catalyzes the phosphorylation of the position 2 hydroxy group of 4-diphosphocytidyl-2C-methyl-D-erythritol. This Histophilus somni (strain 2336) (Haemophilus somnus) protein is 4-diphosphocytidyl-2-C-methyl-D-erythritol kinase.